The sequence spans 505 residues: Glycerol kinase (505 aa).

Thr-15 is an ADP binding site. ATP is bound by residues Thr-15, Thr-16, and Ser-17. Thr-15 is a binding site for sn-glycerol 3-phosphate. Arg-19 contributes to the ADP binding site. Residues Arg-85, Glu-86, Tyr-136, and Asp-249 each coordinate sn-glycerol 3-phosphate. Residues Arg-85, Glu-86, Tyr-136, Asp-249, and Gln-250 each contribute to the glycerol site. 2 residues coordinate ADP: Thr-271 and Gly-314. Residues Thr-271, Gly-314, Gln-318, and Gly-415 each contribute to the ATP site. Residues Gly-415 and Asn-419 each coordinate ADP.

The protein belongs to the FGGY kinase family.

It carries out the reaction glycerol + ATP = sn-glycerol 3-phosphate + ADP + H(+). It functions in the pathway polyol metabolism; glycerol degradation via glycerol kinase pathway; sn-glycerol 3-phosphate from glycerol: step 1/1. Inhibited by fructose 1,6-bisphosphate (FBP). Functionally, key enzyme in the regulation of glycerol uptake and metabolism. Catalyzes the phosphorylation of glycerol to yield sn-glycerol 3-phosphate. The sequence is that of Glycerol kinase from Mycoplasma mycoides subsp. mycoides SC (strain CCUG 32753 / NCTC 10114 / PG1).